Reading from the N-terminus, the 36-residue chain is Pancreatic polypeptide (36 aa).

Y36 carries the tyrosine amide modification.

The protein belongs to the NPY family.

Its subcellular location is the secreted. Hormone secreted by pancreatic cells that acts as a regulator of pancreatic and gastrointestinal functions probably by signaling through the G protein-coupled receptor NPY4R2. The protein is Pancreatic polypeptide (PPY) of Oryctolagus cuniculus (Rabbit).